The primary structure comprises 205 residues: Small ribosomal subunit protein uS4 (205 aa).

Positions 94-157 constitute an S4 RNA-binding domain; it reads SRLDTVVYRM…QQIPLIQESI (64 aa).

Belongs to the universal ribosomal protein uS4 family. Part of the 30S ribosomal subunit. Contacts protein S5. The interaction surface between S4 and S5 is involved in control of translational fidelity.

Functionally, one of the primary rRNA binding proteins, it binds directly to 16S rRNA where it nucleates assembly of the body of the 30S subunit. Its function is as follows. With S5 and S12 plays an important role in translational accuracy. The protein is Small ribosomal subunit protein uS4 of Rickettsia typhi (strain ATCC VR-144 / Wilmington).